Reading from the N-terminus, the 104-residue chain is Protein SMALL AUXIN UP-REGULATED RNA 9 (104 aa).

This sequence belongs to the ARG7 family. In terms of assembly, interacts with and inhibits PP2C-D subfamily of type 2C phosphatases such as PP2C67/PP2C-D1. As to expression, expressed in etiolated hypocotyls, petioles, leaves and flowers.

It is found in the cell membrane. Provide a mechanistic link between auxin and plasma membrane H(+)-ATPases (PM H(+)-ATPases, e.g. AHA1 and AHA2), and triggers PM H(+)-ATPases activity by promoting phosphorylation of their C-terminal autoinhibitory domain as a result of PP2C-D subfamily of type 2C phosphatases inhibition, thus leading to the acidification of the apoplast and the facilitation of solutes and water uptake to drive cell expansion. Triggers plant growth probably by promoting cell elongation. Regulates branch angles and bending. Probably involved in light intensity mediated root development. The polypeptide is Protein SMALL AUXIN UP-REGULATED RNA 9 (Arabidopsis thaliana (Mouse-ear cress)).